The sequence spans 348 residues: Erythronate-4-phosphate dehydrogenase (348 aa).

Substrate is bound by residues threonine 46 and threonine 67. Aspartate 147 serves as a coordination point for NAD(+). Arginine 209 is an active-site residue. Position 233 (aspartate 233) interacts with NAD(+). Glutamate 238 is an active-site residue. Histidine 255 functions as the Proton donor in the catalytic mechanism. Residue glycine 258 participates in NAD(+) binding. Tyrosine 259 lines the substrate pocket.

It belongs to the D-isomer specific 2-hydroxyacid dehydrogenase family. PdxB subfamily. In terms of assembly, homodimer.

It is found in the cytoplasm. It catalyses the reaction 4-phospho-D-erythronate + NAD(+) = (R)-3-hydroxy-2-oxo-4-phosphooxybutanoate + NADH + H(+). The protein operates within cofactor biosynthesis; pyridoxine 5'-phosphate biosynthesis; pyridoxine 5'-phosphate from D-erythrose 4-phosphate: step 2/5. Catalyzes the oxidation of erythronate-4-phosphate to 3-hydroxy-2-oxo-4-phosphonooxybutanoate. This chain is Erythronate-4-phosphate dehydrogenase, found in Bacteroides fragilis (strain YCH46).